We begin with the raw amino-acid sequence, 195 residues long: Transcriptional regulator LdrP (195 aa).

Positions 110–182 (GELRARIARY…YRRVYLLDLA (73 aa)) constitute an HTH crp-type domain. Residues 142–161 (HEEIADATASIRESVSKVLA) constitute a DNA-binding region (H-T-H motif).

Activates transcription. Positively regulates PcrtB promoter upstream of the crtB operon in a cAMP-independent manner. Regulated genes include genes encoding DNA photolyase, phytoene synthase and cytochrome P450 monooxygenase, which are involved in carotenoid biosynthesis. Positively regulates the light-inducible gene cluster in the megaplasmid in a cAMP-independent manner. The chain is Transcriptional regulator LdrP from Thermus thermophilus (strain ATCC BAA-163 / DSM 7039 / HB27).